Reading from the N-terminus, the 810-residue chain is Probable inorganic carbon transporter subunit DabA (810 aa).

4 residues coordinate Zn(2+): Cys-347, Asp-349, His-509, and Cys-524.

It belongs to the inorganic carbon transporter (TC 9.A.2) DabA family. In terms of assembly, forms a complex with DabB. Zn(2+) serves as cofactor.

Its subcellular location is the cell inner membrane. In terms of biological role, part of an energy-coupled inorganic carbon pump. The polypeptide is Probable inorganic carbon transporter subunit DabA (Marinomonas sp. (strain MWYL1)).